We begin with the raw amino-acid sequence, 524 residues long: Serine/threonine-protein phosphatase 2A 56 kDa regulatory subunit gamma isoform (524 aa).

Position 1 is an N-acetylmethionine (M1). The disordered stretch occupies residues 476 to 508 (SDEARQAQKELKKDRPLVRRKSELPQDPHTEKA).

The protein belongs to the phosphatase 2A regulatory subunit B56 family. As to quaternary structure, PP2A consists of a common heterodimeric core enzyme, composed of PPP2CA a 36 kDa catalytic subunit (subunit C) and PPP2R1A a 65 kDa constant regulatory subunit (PR65 or subunit A), that associates with a variety of regulatory subunits. Proteins that associate with the core dimer include three families of regulatory subunits B (the R2/B/PR55/B55, R3/B''/PR72/PR130/PR59 and R5/B'/B56 families), the 48 kDa variable regulatory subunit, viral proteins, and cell signaling molecules. Interacts with SGO1. Interacts with SGO1; the interaction is direct. May interact with TP53. Interacts with IER3 and/or ERK kinases; regulates ERK dephosphorylation. Interacts with CIP2A; this interaction stabilizes CIP2A. As to expression, highest levels in heart, liver and brain. Lower levels in skeletal muscle, spleen, kidney and lung. Isoform 4 is testis-specific.

It is found in the nucleus. The protein localises to the chromosome. The protein resides in the centromere. Functionally, the B regulatory subunit might modulate substrate selectivity and catalytic activity, and might also direct the localization of the catalytic enzyme to a particular subcellular compartment. The PP2A-PPP2R5C holoenzyme may activate TP53 and play a role in DNA damage-induced inhibition of cell proliferation. PP2A-PPP2R5C may also regulate the ERK signaling pathway through ERK dephosphorylation. The chain is Serine/threonine-protein phosphatase 2A 56 kDa regulatory subunit gamma isoform (Ppp2r5c) from Mus musculus (Mouse).